A 481-amino-acid polypeptide reads, in one-letter code: tRNA-guanine(15) transglycosylase (481 aa).

D87 (nucleophile) is an active-site residue. Substrate-binding residues include D122 and A191. 3 residues coordinate Zn(2+): C273, C275, and C278.

The protein belongs to the archaeosine tRNA-ribosyltransferase family. It depends on Zn(2+) as a cofactor.

It catalyses the reaction guanosine(15) in tRNA + 7-cyano-7-deazaguanine = 7-cyano-7-carbaguanosine(15) in tRNA + guanine. It functions in the pathway tRNA modification; archaeosine-tRNA biosynthesis. Functionally, exchanges the guanine residue with 7-cyano-7-deazaguanine (preQ0) at position 15 in the dihydrouridine loop (D-loop) of archaeal tRNAs. This is tRNA-guanine(15) transglycosylase from Archaeoglobus fulgidus (strain ATCC 49558 / DSM 4304 / JCM 9628 / NBRC 100126 / VC-16).